The chain runs to 144 residues: Signal recognition particle 19 kDa protein (144 aa).

The tract at residues 117-144 (TRTQKTGGGDQSLQQGEGSKKGKGKKKK) is disordered.

The protein belongs to the SRP19 family. As to quaternary structure, component of a signal recognition particle complex that consists of a 7SL RNA molecule of 300 nucleotides and six protein subunits: SRP72, SRP68, SRP54, SRP19, SRP14 and SRP9. Interacts with IPO5, IPO7, IPO8, KPNB1 and TNPO1. Interactions with IPO8 and TNPO1 may be involved in SRP19 import into the nucleus.

The protein localises to the cytoplasm. It is found in the nucleus. Its subcellular location is the nucleolus. It localises to the nucleoplasm. Its function is as follows. Component of the signal recognition particle (SRP) complex, a ribonucleoprotein complex that mediates the cotranslational targeting of secretory and membrane proteins to the endoplasmic reticulum (ER). Binds directly to 7SL RNA. Mediates binding of SRP54 to the SRP complex. The protein is Signal recognition particle 19 kDa protein of Canis lupus familiaris (Dog).